A 403-amino-acid chain; its full sequence is 26S proteasome regulatory subunit 6B homolog (403 aa).

M1 is modified (N-acetylmethionine). 191–198 (GPPGTGKT) contacts ATP.

This sequence belongs to the AAA ATPase family.

Its subcellular location is the cytoplasm. The protein resides in the nucleus. The 26S proteasome is involved in the ATP-dependent degradation of ubiquitinated proteins. The regulatory (or ATPase) complex confers ATP dependency and substrate specificity to the 26S complex. This chain is 26S proteasome regulatory subunit 6B homolog (psmC4), found in Dictyostelium discoideum (Social amoeba).